The following is a 362-amino-acid chain: Heat-inducible transcription repressor HrcA (362 aa).

The protein belongs to the HrcA family.

Functionally, negative regulator of class I heat shock genes (grpE-dnaK-dnaJ and groELS operons). Prevents heat-shock induction of these operons. In Bradyrhizobium sp. (strain BTAi1 / ATCC BAA-1182), this protein is Heat-inducible transcription repressor HrcA.